A 462-amino-acid polypeptide reads, in one-letter code: L-seryl-tRNA(Sec) selenium transferase (462 aa).

Lys293 is modified (N6-(pyridoxal phosphate)lysine).

This sequence belongs to the SelA family. Pyridoxal 5'-phosphate serves as cofactor.

The protein localises to the cytoplasm. The enzyme catalyses L-seryl-tRNA(Sec) + selenophosphate + H(+) = L-selenocysteinyl-tRNA(Sec) + phosphate. Its pathway is aminoacyl-tRNA biosynthesis; selenocysteinyl-tRNA(Sec) biosynthesis; selenocysteinyl-tRNA(Sec) from L-seryl-tRNA(Sec) (bacterial route): step 1/1. Its function is as follows. Converts seryl-tRNA(Sec) to selenocysteinyl-tRNA(Sec) required for selenoprotein biosynthesis. The polypeptide is L-seryl-tRNA(Sec) selenium transferase (Clostridium botulinum (strain Langeland / NCTC 10281 / Type F)).